The following is an 81-amino-acid chain: MEVMRVRSDLIATRRIPGLKNISLRVMEDATGKVSVACDPIGVPEGCWVFTISGSAARFGVGDFEILTDLTIGGIIDHWVT.

The region spanning 1–77 is the BMV domain; sequence MEVMRVRSDL…TDLTIGGIID (77 aa).

Belongs to the CcmL/EutN family. CsoS4 subfamily. Homopentamer.

It localises to the carboxysome. In terms of biological role, probably forms vertices in the carboxysome. Has been modeled to induce curvature upon insertion into an otherwise flat hexagonal layer of major carboxysome subunits. A minor shell protein, only 12 pentamers of CsoS4A/CsoS4B are calculated to be present in each carboxysome. The 2 CsoS4 proteins contribute to the impermeability of the carboxysome to CO(2). Its central pore is probably too small to allow passage of metabolites; its function might be to anchor different proteins or metabolites to the carboxysome. Functionally, unlike beta-carboxysomes, alpha-carboxysomes (Cb) can form without cargo protein. CsoS2 is essential for Cb formation and is also capable of targeting foreign proteins to the Cb. The Cb shell assembles with the aid of CsoS2; CsoS1A, CsoS1B and CsoS1C form the majority of the shell while CsoS4A and CsoS4B form vertices. CsoS1D forms pseudohexamers that probably control metabolite flux into and out of the shell. In Halothiobacillus neapolitanus (strain ATCC 23641 / c2) (Thiobacillus neapolitanus), this protein is Carboxysome shell vertex protein CsoS4B.